The chain runs to 122 residues: Large ribosomal subunit protein uL14 (122 aa).

This sequence belongs to the universal ribosomal protein uL14 family. In terms of assembly, part of the 50S ribosomal subunit. Forms a cluster with proteins L3 and L19. In the 70S ribosome, L14 and L19 interact and together make contacts with the 16S rRNA in bridges B5 and B8.

Binds to 23S rRNA. Forms part of two intersubunit bridges in the 70S ribosome. The polypeptide is Large ribosomal subunit protein uL14 (Lactobacillus delbrueckii subsp. bulgaricus (strain ATCC BAA-365 / Lb-18)).